The following is a 688-amino-acid chain: Glycine--tRNA ligase beta subunit (688 aa).

This sequence belongs to the class-II aminoacyl-tRNA synthetase family. In terms of assembly, tetramer of two alpha and two beta subunits.

Its subcellular location is the cytoplasm. It carries out the reaction tRNA(Gly) + glycine + ATP = glycyl-tRNA(Gly) + AMP + diphosphate. The protein is Glycine--tRNA ligase beta subunit of Syntrophomonas wolfei subsp. wolfei (strain DSM 2245B / Goettingen).